Here is a 307-residue protein sequence, read N- to C-terminus: Phosphate import ATP-binding protein PstB (307 aa).

The tract at residues 1 to 30 (MSETTYTTTEDTDDTNSTDSMVGTTTGETD) is disordered. The 255-residue stretch at 48–302 (LGVDDLDVYY…PQSERVEDYI (255 aa)) folds into the ABC transporter domain. ATP is bound at residue 80 to 87 (GPSGCGKS).

It belongs to the ABC transporter superfamily. Phosphate importer (TC 3.A.1.7) family. As to quaternary structure, the complex is composed of two ATP-binding proteins (PstB), two transmembrane proteins (PstC and PstA) and a solute-binding protein (PstS).

It is found in the cell membrane. It catalyses the reaction phosphate(out) + ATP + H2O = ADP + 2 phosphate(in) + H(+). Its function is as follows. Part of the ABC transporter complex PstSACB involved in phosphate import. Responsible for energy coupling to the transport system. The chain is Phosphate import ATP-binding protein PstB from Haloquadratum walsbyi (strain DSM 16790 / HBSQ001).